A 147-amino-acid polypeptide reads, in one-letter code: D-aminoacyl-tRNA deacylase (147 aa).

The Gly-cisPro motif, important for rejection of L-amino acids signature appears at 137-138 (GP).

This sequence belongs to the DTD family. As to quaternary structure, homodimer.

Its subcellular location is the cytoplasm. It catalyses the reaction glycyl-tRNA(Ala) + H2O = tRNA(Ala) + glycine + H(+). The catalysed reaction is a D-aminoacyl-tRNA + H2O = a tRNA + a D-alpha-amino acid + H(+). Its function is as follows. An aminoacyl-tRNA editing enzyme that deacylates mischarged D-aminoacyl-tRNAs. Also deacylates mischarged glycyl-tRNA(Ala), protecting cells against glycine mischarging by AlaRS. Acts via tRNA-based rather than protein-based catalysis; rejects L-amino acids rather than detecting D-amino acids in the active site. By recycling D-aminoacyl-tRNA to D-amino acids and free tRNA molecules, this enzyme counteracts the toxicity associated with the formation of D-aminoacyl-tRNA entities in vivo and helps enforce protein L-homochirality. The protein is D-aminoacyl-tRNA deacylase of Exiguobacterium sp. (strain ATCC BAA-1283 / AT1b).